Reading from the N-terminus, the 281-residue chain is Probable endonuclease 4 (281 aa).

Positions 69, 109, 145, 179, 182, 216, 229, 231, and 261 each coordinate Zn(2+).

This sequence belongs to the AP endonuclease 2 family. Requires Zn(2+) as cofactor.

The catalysed reaction is Endonucleolytic cleavage to 5'-phosphooligonucleotide end-products.. Functionally, endonuclease IV plays a role in DNA repair. It cleaves phosphodiester bonds at apurinic or apyrimidinic (AP) sites, generating a 3'-hydroxyl group and a 5'-terminal sugar phosphate. This chain is Probable endonuclease 4, found in Pectobacterium atrosepticum (strain SCRI 1043 / ATCC BAA-672) (Erwinia carotovora subsp. atroseptica).